A 199-amino-acid polypeptide reads, in one-letter code: dITP/XTP pyrophosphatase (199 aa).

9–14 (TGNKGK) lines the substrate pocket. Mg(2+)-binding residues include Glu-41 and Asp-70. Residue Asp-70 is the Proton acceptor of the active site. Substrate contacts are provided by residues Ser-71, 157–160 (FGYD), Lys-180, and 185–186 (HR).

The protein belongs to the HAM1 NTPase family. As to quaternary structure, homodimer. Mg(2+) serves as cofactor.

It catalyses the reaction XTP + H2O = XMP + diphosphate + H(+). The enzyme catalyses dITP + H2O = dIMP + diphosphate + H(+). The catalysed reaction is ITP + H2O = IMP + diphosphate + H(+). Functionally, pyrophosphatase that catalyzes the hydrolysis of nucleoside triphosphates to their monophosphate derivatives, with a high preference for the non-canonical purine nucleotides XTP (xanthosine triphosphate), dITP (deoxyinosine triphosphate) and ITP. Seems to function as a house-cleaning enzyme that removes non-canonical purine nucleotides from the nucleotide pool, thus preventing their incorporation into DNA/RNA and avoiding chromosomal lesions. In Mannheimia succiniciproducens (strain KCTC 0769BP / MBEL55E), this protein is dITP/XTP pyrophosphatase.